Reading from the N-terminus, the 66-residue chain is MAKGKDARLTVILECTSCVRNGVNKESPGISRYITQKNRHNTSSRLELRKYCRYCYKHTIHGEIKK.

It belongs to the bacterial ribosomal protein bL33 family.

It localises to the plastid. Its subcellular location is the chloroplast. The polypeptide is Large ribosomal subunit protein bL33c (Acorus calamus (Sweet flag)).